A 930-amino-acid polypeptide reads, in one-letter code: Isoleucine--tRNA ligase (930 aa).

The 'HIGH' region signature appears at 57 to 67; it reads PYANGNIHVGH. Position 554 (Glu554) interacts with L-isoleucyl-5'-AMP. The short motif at 595 to 599 is the 'KMSKS' region element; the sequence is KMSKS. Lys598 serves as a coordination point for ATP.

The protein belongs to the class-I aminoacyl-tRNA synthetase family. IleS type 1 subfamily. In terms of assembly, monomer.

Its subcellular location is the cytoplasm. It carries out the reaction tRNA(Ile) + L-isoleucine + ATP = L-isoleucyl-tRNA(Ile) + AMP + diphosphate. Catalyzes the attachment of isoleucine to tRNA(Ile). As IleRS can inadvertently accommodate and process structurally similar amino acids such as valine, to avoid such errors it has two additional distinct tRNA(Ile)-dependent editing activities. One activity is designated as 'pretransfer' editing and involves the hydrolysis of activated Val-AMP. The other activity is designated 'posttransfer' editing and involves deacylation of mischarged Val-tRNA(Ile). This chain is Isoleucine--tRNA ligase, found in Streptococcus agalactiae serotype III (strain NEM316).